A 488-amino-acid polypeptide reads, in one-letter code: Germacrene A acid 8-beta-hydroxylase (488 aa).

A helical; Signal-anchor for type II membrane protein transmembrane segment spans residues 2–22 (ELFTIFSIVVSSLILFTFWSL). N407 carries an N-linked (GlcNAc...) asparagine glycan. C429 is a binding site for heme.

The protein belongs to the cytochrome P450 family. Requires heme as cofactor. As to expression, expressed in leaf primordia.

Its subcellular location is the membrane. It carries out the reaction germacra-1(10),4,11(13)-trien-12-oate + reduced [NADPH--hemoprotein reductase] + O2 = 8beta-hydroxygermacra-1(10),4,11(13)-trien-12-oate + oxidized [NADPH--hemoprotein reductase] + H2O + H(+). It functions in the pathway secondary metabolite biosynthesis; terpenoid biosynthesis. In terms of biological role, involved in the biosynthesis of germacrene-derived sesquiterpene lactones. Hydroxylates germacrene A acid to 8-beta-hydroxy-germacrene A acid. Unlike 6-alpha-hydroxy-germacrene A acid, this compound cannot undergo spontaneous lactonization. The chain is Germacrene A acid 8-beta-hydroxylase from Helianthus annuus (Common sunflower).